The following is a 316-amino-acid chain: 4-hydroxy-3-methylbut-2-enyl diphosphate reductase (316 aa).

C12 serves as a coordination point for [4Fe-4S] cluster. The (2E)-4-hydroxy-3-methylbut-2-enyl diphosphate site is built by H41 and H74. Dimethylallyl diphosphate contacts are provided by H41 and H74. Isopentenyl diphosphate is bound by residues H41 and H74. C96 lines the [4Fe-4S] cluster pocket. Residue H124 coordinates (2E)-4-hydroxy-3-methylbut-2-enyl diphosphate. Residue H124 coordinates dimethylallyl diphosphate. H124 is a binding site for isopentenyl diphosphate. The active-site Proton donor is E126. T167 is a (2E)-4-hydroxy-3-methylbut-2-enyl diphosphate binding site. C197 contributes to the [4Fe-4S] cluster binding site. (2E)-4-hydroxy-3-methylbut-2-enyl diphosphate-binding residues include S225, S226, N227, and S269. Residues S225, S226, N227, and S269 each coordinate dimethylallyl diphosphate. Isopentenyl diphosphate is bound by residues S225, S226, N227, and S269.

It belongs to the IspH family. Homodimer. It depends on [4Fe-4S] cluster as a cofactor.

The catalysed reaction is isopentenyl diphosphate + 2 oxidized [2Fe-2S]-[ferredoxin] + H2O = (2E)-4-hydroxy-3-methylbut-2-enyl diphosphate + 2 reduced [2Fe-2S]-[ferredoxin] + 2 H(+). The enzyme catalyses dimethylallyl diphosphate + 2 oxidized [2Fe-2S]-[ferredoxin] + H2O = (2E)-4-hydroxy-3-methylbut-2-enyl diphosphate + 2 reduced [2Fe-2S]-[ferredoxin] + 2 H(+). The protein operates within isoprenoid biosynthesis; dimethylallyl diphosphate biosynthesis; dimethylallyl diphosphate from (2E)-4-hydroxy-3-methylbutenyl diphosphate: step 1/1. It participates in isoprenoid biosynthesis; isopentenyl diphosphate biosynthesis via DXP pathway; isopentenyl diphosphate from 1-deoxy-D-xylulose 5-phosphate: step 6/6. Catalyzes the conversion of 1-hydroxy-2-methyl-2-(E)-butenyl 4-diphosphate (HMBPP) into a mixture of isopentenyl diphosphate (IPP) and dimethylallyl diphosphate (DMAPP). Acts in the terminal step of the DOXP/MEP pathway for isoprenoid precursor biosynthesis. The protein is 4-hydroxy-3-methylbut-2-enyl diphosphate reductase of Pectobacterium atrosepticum (strain SCRI 1043 / ATCC BAA-672) (Erwinia carotovora subsp. atroseptica).